A 1171-amino-acid chain; its full sequence is MNTLPVVSLTASSSFKFFHFPSLHRSLSHSPNFSFTKSLILNPNHLSFKSTLNSLSPSQSQLYEEEDDEEEEEEDEDDDDEAADEYDNISDEIRNSDDDDDDEETEFSVDLPTESARERVEFRWQRVEKLRSLVRDFGVEMIDIDELISIYDFRIDKFQRLAIEAFLRGSSVVVSAPTSSGKTLIAEAAAVSTVAKGRRLFYTTPLKALSNQKFREFRETFGDDNVGLLTGDSAINKDAQIVIMTTEILRNMLYQSVGMASSGTGLFHVDAIVLDEVHYLSDISRGTVWEEIVIYCPKEVQLICLSATVANPDELAGWIGEIHGKTELVTSTRRPVPLTWYFSTKHSLLPLLDEKGINVNRKLSLNYLQLSASEARFRDDDDGYRKRRSKKRGGDTSYNNLVNVTDYPLSKNEINKIRRSQVPQISDTLWHLQGKNMLPAIWFIFNRRGCDAAVQYVENFQLLDDCEKSEVELALKKFRVLYPDAVRESAEKGLLRGIAAHHAGCLPLWKSFIEELFQRGLVKVVFATETLAAGINMPARTAVISSLSKKAGNERIELGPNELYQMAGRAGRRGIDEKGYTVLVQTAFEGAEECCKLVFAGVKPLVSQFTASYGMVLNLVAGSKVTRKSSGTEAGKVLQAGRSLEEAKKLVEKSFGNYVSSNVTVAAKQELAEIDNKIEILSSEISDEAIDKKSRKLLSARDYKEITVLKEELREEKRKRAEQRRRMELERFLALKPLLKGMEEGNLPFICLEFKDSEGREQSVPAVYLGHIDSFQGSKLQKMMSLDESFALNLIEDELAADEPGKPNVKPSYYVALGSDNSWYLFTEKWVRTVYRTGFPNIALALGDALPREIMKNLLDKADMQWDKLAESELGSLWRLEGSLETWSWSLNVPVLSSLSDEDEVLHMSEEYDNAAQKYKEQRSKISRLKKKMSRSEGFREYKKILENANLTVEKMKRLKARSRRLINRLEQIEPSGWKDFMRISNVIHESRALDINTHLIFPLGETAAAIRGENELWLAMVLRNKALVDLKPPQLAGVCASLVSEGIKVRPWRDNNYIYEPSDTVVDMVNFLEDQRSSLIKLQEKHEVMIPCCLDVQFSGMVEAWASGLSWKEMMMECAMDEGDLARLLRRTIDLLAQIPKLPDIDPVLQRSAAAAADIMDRPPISELAG.

The N-terminal 58 residues, 1-58 (MNTLPVVSLTASSSFKFFHFPSLHRSLSHSPNFSFTKSLILNPNHLSFKSTLNSLSPS), are a transit peptide targeting the chloroplast. Positions 53–62 (NSLSPSQSQL) are enriched in polar residues. Residues 53–111 (NSLSPSQSQLYEEEDDEEEEEEDEDDDDEAADEYDNISDEIRNSDDDDDDEETEFSVDL) are disordered. 2 stretches are compositionally biased toward acidic residues: residues 63–90 (YEEE…DNIS) and 97–107 (DDDDDDEETEF). The region spanning 163-327 (IEAFLRGSSV…WIGEIHGKTE (165 aa)) is the Helicase ATP-binding domain. Residue 176-183 (APTSSGKT) coordinates ATP. A DEVH box motif is present at residues 275–278 (DEVH). In terms of domain architecture, Helicase C-terminal spans 424 to 620 (QISDTLWHLQ…ASYGMVLNLV (197 aa)).

It belongs to the DExH box helicase family.

It is found in the plastid. The protein localises to the chloroplast. It localises to the cytoplasmic granule. The enzyme catalyses ATP + H2O = ADP + phosphate + H(+). Its function is as follows. RNA helicase involved in group II intron splicing. Essential protein required during embryogenesis. Involved in post-transcriptional gene silencing. Modulates the determination of cell fate. Necessary for normal plasmodesmata (PD) development and aperture regulation. The protein is DExH-box ATP-dependent RNA helicase DExH15 chloroplastic (ISE2) of Arabidopsis thaliana (Mouse-ear cress).